We begin with the raw amino-acid sequence, 1196 residues long: DNA-directed RNA polymerase subunit beta (1196 aa).

The protein belongs to the RNA polymerase beta chain family. The RNAP catalytic core consists of 2 alpha, 1 beta, 1 beta' and 1 omega subunit. When a sigma factor is associated with the core the holoenzyme is formed, which can initiate transcription.

It catalyses the reaction RNA(n) + a ribonucleoside 5'-triphosphate = RNA(n+1) + diphosphate. Functionally, DNA-dependent RNA polymerase catalyzes the transcription of DNA into RNA using the four ribonucleoside triphosphates as substrates. In Lactococcus lactis subsp. cremoris (strain MG1363), this protein is DNA-directed RNA polymerase subunit beta.